The following is a 107-amino-acid chain: Heme-degrading monooxygenase (107 aa).

Positions Ile-2–Tyr-94 constitute an ABM domain. Asn-6 contributes to the Fe cation binding site. His-76 contacts heme.

Belongs to the antibiotic biosynthesis monooxygenase family. Heme-degrading monooxygenase IsdG subfamily. Homodimer.

It localises to the cytoplasm. It catalyses the reaction heme b + 3 reduced [NADPH--hemoprotein reductase] + 3 O2 = biliverdin IXalpha + CO + Fe(2+) + 3 oxidized [NADPH--hemoprotein reductase] + 3 H2O + H(+). Allows bacterial pathogens to use the host heme as an iron source. Catalyzes the oxidative degradation of the heme macrocyclic porphyrin ring to the biliverdin in the presence of a suitable electron donor such as ascorbate or NADPH--cytochrome P450 reductase, with subsequent release of free iron. The protein is Heme-degrading monooxygenase of Bacillus mycoides (strain KBAB4) (Bacillus weihenstephanensis).